The following is a 500-amino-acid chain: NAD(P)H-quinone oxidoreductase chain 4, chloroplastic (500 aa).

A run of 14 helical transmembrane segments spans residues phenylalanine 4 to leucine 24, tyrosine 35 to phenylalanine 55, isoleucine 87 to valine 107, leucine 113 to serine 130, leucine 134 to methionine 154, phenylalanine 167 to leucine 187, isoleucine 211 to histidine 231, histidine 242 to valine 262, alanine 272 to alanine 292, isoleucine 305 to aspartate 325, glycine 330 to glycine 350, leucine 386 to threonine 406, isoleucine 416 to methionine 436, and leucine 462 to valine 482.

Belongs to the complex I subunit 4 family.

It localises to the plastid. The protein resides in the chloroplast thylakoid membrane. The enzyme catalyses a plastoquinone + NADH + (n+1) H(+)(in) = a plastoquinol + NAD(+) + n H(+)(out). It carries out the reaction a plastoquinone + NADPH + (n+1) H(+)(in) = a plastoquinol + NADP(+) + n H(+)(out). This chain is NAD(P)H-quinone oxidoreductase chain 4, chloroplastic, found in Nasturtium officinale (Watercress).